A 273-amino-acid chain; its full sequence is MAIVKCKPTSPGRRHVVKVVTPELHKGKPFAGLLEEKRKTGGRNNNGRITTRHIGGGHKQHYRLIDFKRNKDGIPAKIERLEYDPNRSANIALVLYADGERRYILAPKNLKAGDPIVSGVDAPIKAGNALPMRNIPVGTTVHAVEMKPGKGAQIARSAGASVQILAREGAYVTLRLRSGEVRKVLAECRATVGEVGNAEHMLRQLGKAGANRWRGIRPTVRGMAMNPVDHPHGGGEGRNKGIQPVSPWGTPAKGYRTRSNKRTDKYIVRRRNK.

The interval 222 to 273 (GMAMNPVDHPHGGGEGRNKGIQPVSPWGTPAKGYRTRSNKRTDKYIVRRRNK) is disordered. The span at 229–239 (DHPHGGGEGRN) shows a compositional bias: basic and acidic residues.

It belongs to the universal ribosomal protein uL2 family. Part of the 50S ribosomal subunit. Forms a bridge to the 30S subunit in the 70S ribosome.

Its function is as follows. One of the primary rRNA binding proteins. Required for association of the 30S and 50S subunits to form the 70S ribosome, for tRNA binding and peptide bond formation. It has been suggested to have peptidyltransferase activity; this is somewhat controversial. Makes several contacts with the 16S rRNA in the 70S ribosome. The chain is Large ribosomal subunit protein uL2 from Tolumonas auensis (strain DSM 9187 / NBRC 110442 / TA 4).